The primary structure comprises 504 residues: uncharacterized protein (504 aa).

The tract at residues 431–483 (GEAEKYRKLQDGDEDEEGTGKPEPKKARRKGFGGKFAPKHEEKVTRAVGVNSE) is disordered.

This sequence belongs to the CBF/MAK21 family.

This is an uncharacterized protein from Caenorhabditis elegans.